The following is a 1040-amino-acid chain: Multidrug resistance protein MdtB (1040 aa).

12 helical membrane-spanning segments follow: residues 25–45 (LLMAAMLLAGIIGYRFLPVAA), 347–367 (LMLAIALVVMIIYLFLRNIPA), 369–389 (IIPGVAVPLSLIGTFAVMVFL), 396–416 (LTLMALTIATGFVVDDAIVVI), 440–460 (IGFTIISLTFSLIAVLIPLLF), 472–492 (FAVTLAVAILISAVVSLTLTP), 537–557 (WLTLSVAFATLLLSVMLWIVI), 869–889 (LIVAAVVAMYIVLGVLYESFI), 890–910 (HPITILSTLPTAGVGALLALM), 911–931 (IAGSELDIIAIIGIILLIGIV), 968–988 (ILMTTLAALLGALPLMLSTGV), and 998–1018 (IAMVGGLLVSQILTLFTTPVI).

The protein belongs to the resistance-nodulation-cell division (RND) (TC 2.A.6) family. MdtB subfamily. As to quaternary structure, part of a tripartite efflux system composed of MdtA, MdtB and MdtC. MdtB forms a heteromultimer with MdtC.

Its subcellular location is the cell inner membrane. This Salmonella arizonae (strain ATCC BAA-731 / CDC346-86 / RSK2980) protein is Multidrug resistance protein MdtB.